A 100-amino-acid polypeptide reads, in one-letter code: Large ribosomal subunit protein uL23 (100 aa).

Belongs to the universal ribosomal protein uL23 family. Part of the 50S ribosomal subunit. Contacts protein L29, and trigger factor when it is bound to the ribosome.

Functionally, one of the early assembly proteins it binds 23S rRNA. One of the proteins that surrounds the polypeptide exit tunnel on the outside of the ribosome. Forms the main docking site for trigger factor binding to the ribosome. The polypeptide is Large ribosomal subunit protein uL23 (Shigella dysenteriae serotype 1 (strain Sd197)).